Here is a 103-residue protein sequence, read N- to C-terminus: Conantokin R1-A (103 aa).

Positions 1–21 are cleaved as a signal peptide; sequence MQLYTYLYLLVPLVTFHLILG. Residues 22–79 constitute a propeptide that is removed on maturation; it reads TGTLDHGGALTERRSTDATALKPEPVLQKSAARSTDDNGKDRLTQMKRILKKRGNNPR. Residues 34 to 83 form a disordered region; sequence RRSTDATALKPEPVLQKSAARSTDDNGKDRLTQMKRILKKRGNNPRADEE. Basic and acidic residues predominate over residues 55–65; it reads STDDNGKDRLT. 4-carboxyglutamate is present on residues Glu-82, Glu-83, and Glu-89.

This sequence belongs to the conotoxin B superfamily. Requires Ca(2+) as cofactor. Mg(2+) is required as a cofactor. Expressed by the venom duct.

It localises to the secreted. Conantokins inhibit N-methyl-D-aspartate (NMDA) receptors. This toxin has the highest potency for the NR2B/GRIN2B subunit (IC(50)=0.11 uM), followed by NR2D/GRIN2D (IC(50)=0.48 uM), NR2A/GRIN2A (IC(50)=2.1 uM), and NR2C/GRIN2C (IC(50)=6.1 uM) subunits when tested on rat receptors. The sequence is that of Conantokin R1-A from Conus rolani (Cone snail).